Here is an 879-residue protein sequence, read N- to C-terminus: Beta-alanyl-bioamine nonribosomal peptide synthetase ebony (879 aa).

Residues 26-540 (FEEQQLRHAD…EHVPLLVNGK (515 aa)) are adenylation. In terms of domain architecture, Carrier spans 573-650 (EDLKLTARDL…EIIEKMAANH (78 aa)). Ser611 bears the O-(pantetheine 4'-phosphoryl)serine mark. The segment at 666-679 (LKMEAVPLRLEHRQ) is condensation. Residue Glu696 coordinates dopamine. Glu696 is a histamine binding site. Residues Thr825 and Asn827 each contribute to the beta-alanine site.

It belongs to the NRP synthetase family. Requires pantetheine 4'-phosphate as cofactor. The cofactor is Mg(2+). Expressed in the optic neuropils in the lamina and in distinct cells at the distal border of the medulla cortex (at protein level). Expressed in the protocerebrum and thoracic ganglia (at protein level). Expressed in antennal lobes, antennal nerves and subesophagic ganglion (at protein level). Specifically, expressed in epithelial glial cells of the medulla that surround the synaptic cleft of photoreceptor axonal endings (at protein level). Expressed in some cells in the cuticle.

It is found in the cytoplasm. It carries out the reaction histamine + beta-alanine + ATP = carcinine + AMP + diphosphate + H(+). The enzyme catalyses beta-alanine + ATP + H(+) = beta-alanyl-5'-AMP + diphosphate. It catalyses the reaction beta-alanyl-5'-AMP + holo-[peptidyl-carrier protein] = beta-alanyl-[peptidyl-carrier protein] + AMP + H(+). The catalysed reaction is beta-alanyl-[peptidyl-carrier protein] + histamine = carcinine + holo-[peptidyl-carrier protein] + H(+). It carries out the reaction dopamine + beta-alanine + ATP = beta-alanyl-dopamine + AMP + diphosphate + H(+). The enzyme catalyses beta-alanyl-[peptidyl-carrier protein] + dopamine = beta-alanyl-dopamine + holo-[peptidyl-carrier protein] + H(+). In terms of biological role, nonribosomal peptide synthase which is required for the regulation of histamine and dopamine levels in various tissues through their condensation with beta-alanine. In epithelial glial cells, plays an essential role in the inactivation of histamine, the main neurotransmitter in the optical nerve system, by catalyzing the conversion of histamine into carcinine. In the cuticle, catalyzes the condensation of beta-alanine with dopamine to form beta-alanyl-dopamine (NBAD), a metabolite involved in the pigmentation and sclerotization of the insect cuticle. Also, regulates the cuticular hydrocarbon composition in females. Acts downstream of the body clock to regulate circadian behavioral rhythms. Can also condense beta-alanine with biogenic amines tyramine, octopamine, and serotonin in vitro. The polypeptide is Beta-alanyl-bioamine nonribosomal peptide synthetase ebony (Drosophila melanogaster (Fruit fly)).